Consider the following 356-residue polypeptide: Histidinol-phosphate aminotransferase (356 aa).

K214 is modified (N6-(pyridoxal phosphate)lysine).

This sequence belongs to the class-II pyridoxal-phosphate-dependent aminotransferase family. Histidinol-phosphate aminotransferase subfamily. Homodimer. The cofactor is pyridoxal 5'-phosphate.

The enzyme catalyses L-histidinol phosphate + 2-oxoglutarate = 3-(imidazol-4-yl)-2-oxopropyl phosphate + L-glutamate. Its pathway is amino-acid biosynthesis; L-histidine biosynthesis; L-histidine from 5-phospho-alpha-D-ribose 1-diphosphate: step 7/9. This Escherichia coli O6:K15:H31 (strain 536 / UPEC) protein is Histidinol-phosphate aminotransferase.